The sequence spans 177 residues: Cytochrome c-type biogenesis protein CcmE (177 aa).

Over Met1–Arg7 the chain is Cytoplasmic. A helical; Signal-anchor for type II membrane protein transmembrane segment spans residues Leu8 to Ala28. Topologically, residues Met29–Arg177 are periplasmic. Residues His122 and Tyr126 each contribute to the heme site. The disordered stretch occupies residues Asp133 to Arg177. The segment covering Gly145–Thr166 has biased composition (basic and acidic residues).

Belongs to the CcmE/CycJ family.

It is found in the cell inner membrane. Heme chaperone required for the biogenesis of c-type cytochromes. Transiently binds heme delivered by CcmC and transfers the heme to apo-cytochromes in a process facilitated by CcmF and CcmH. The protein is Cytochrome c-type biogenesis protein CcmE of Methylorubrum extorquens (strain PA1) (Methylobacterium extorquens).